A 199-amino-acid polypeptide reads, in one-letter code: Outer-membrane lipoprotein LolB (199 aa).

A signal peptide spans 1–28 (MSACPAPRSPVRWLHAFTLFLLLAVLAG). Cys-29 is lipidated: N-palmitoyl cysteine. Cys-29 is lipidated: S-diacylglycerol cysteine.

It belongs to the LolB family. Monomer.

The protein resides in the cell outer membrane. In terms of biological role, plays a critical role in the incorporation of lipoproteins in the outer membrane after they are released by the LolA protein. This chain is Outer-membrane lipoprotein LolB, found in Bordetella pertussis (strain Tohama I / ATCC BAA-589 / NCTC 13251).